Reading from the N-terminus, the 198-residue chain is Acyl carrier protein phosphodiesterase (198 aa).

The protein belongs to the AcpH family.

The catalysed reaction is holo-[ACP] + H2O = apo-[ACP] + (R)-4'-phosphopantetheine + H(+). Converts holo-ACP to apo-ACP by hydrolytic cleavage of the phosphopantetheine prosthetic group from ACP. The sequence is that of Acyl carrier protein phosphodiesterase from Photorhabdus laumondii subsp. laumondii (strain DSM 15139 / CIP 105565 / TT01) (Photorhabdus luminescens subsp. laumondii).